Here is a 158-residue protein sequence, read N- to C-terminus: MALWRLSVLCGAREGRALFLRTPVVRPALVSAFLQDRPAQGWCGTQHIHLSPSHHSGSKAASLHWTGERVVSVLLLGLIPAAYLNPCSAMDYSLAATLTLHSHWGIGQVVTDYVHGDAVQKAAKTGLLVLSAFTFAGLCYFNYHDVGICKAVAMLWKL.

Residues 1 to 55 constitute a mitochondrion transit peptide; sequence MALWRLSVLCGAREGRALFLRTPVVRPALVSAFLQDRPAQGWCGTQHIHLSPSHH. Over 56 to 62 the chain is Mitochondrial matrix; sequence SGSKAAS. The helical transmembrane segment at 63–84 threads the bilayer; that stretch reads LHWTGERVVSVLLLGLIPAAYL. At 85 to 89 the chain is on the mitochondrial intermembrane side; it reads NPCSA. The chain crosses the membrane as a helical span at residues 90–110; it reads MDYSLAATLTLHSHWGIGQVV. Histidine 101 contributes to the heme b binding site. At 111–119 the chain is on the mitochondrial matrix side; the sequence is TDYVHGDAV. Tyrosine 113 is an a ubiquinone binding site. The chain crosses the membrane as a helical span at residues 120–141; that stretch reads QKAAKTGLLVLSAFTFAGLCYF. At 142 to 158 the chain is on the mitochondrial intermembrane side; the sequence is NYHDVGICKAVAMLWKL.

The protein belongs to the CybS family. As to quaternary structure, component of complex II composed of four subunits: the flavoprotein (FP) SDHA, iron-sulfur protein (IP) SDHB, and a cytochrome b560 composed of SDHC and SDHD.

The protein localises to the mitochondrion inner membrane. It functions in the pathway carbohydrate metabolism; tricarboxylic acid cycle. Membrane-anchoring subunit of succinate dehydrogenase (SDH) that is involved in complex II of the mitochondrial electron transport chain and is responsible for transferring electrons from succinate to ubiquinone (coenzyme Q). SDH also oxidizes malate to the non-canonical enol form of oxaloacetate, enol-oxaloacetate. Enol-oxaloacetate, which is a potent inhibitor of the succinate dehydrogenase activity, is further isomerized into keto-oxaloacetate. The polypeptide is Succinate dehydrogenase [ubiquinone] cytochrome b small subunit, mitochondrial (SDHD) (Bos taurus (Bovine)).